The primary structure comprises 55 residues: MAKGGREKIKLESTAGTGHFYTTTKNKKTMPEKMEISKFDPKARKHVMYKETKLK.

Positions 1-11 (MAKGGREKIKL) are enriched in basic and acidic residues. Residues 1-29 (MAKGGREKIKLESTAGTGHFYTTTKNKKT) form a disordered region. A compositionally biased stretch (polar residues) spans 14 to 24 (TAGTGHFYTTT).

This sequence belongs to the bacterial ribosomal protein bL33 family.

The sequence is that of Large ribosomal subunit protein bL33 from Thiobacillus denitrificans (strain ATCC 25259 / T1).